We begin with the raw amino-acid sequence, 647 residues long: Probable squalene--hopene cyclase (647 aa).

A PFTB 1 repeat occupies 67-108 (EAKIGNYLRRTQGAHGGWPLVHDGPFDMSASVKSYFALKMIG). The Proton donor role is filled by D388. PFTB repeat units lie at residues 413–454 (IARG…GALL) and 530–577 (IRKA…ALLG).

The protein belongs to the terpene cyclase/mutase family.

The enzyme catalyses squalene = hop-22(29)-ene. It catalyses the reaction squalene + H2O = hopan-22-ol. It participates in secondary metabolite biosynthesis; hopanoid biosynthesis. Functionally, catalyzes the cyclization of squalene into hopene. Probably part of an operon y4aABCD involved in the synthesis of an isoprenoid compound. The polypeptide is Probable squalene--hopene cyclase (shc) (Sinorhizobium fredii (strain NBRC 101917 / NGR234)).